Reading from the N-terminus, the 421-residue chain is Enolase (421 aa).

Residue Q165 participates in (2R)-2-phosphoglycerate binding. E207 serves as the catalytic Proton donor. D244, E285, and D312 together coordinate Mg(2+). (2R)-2-phosphoglycerate is bound by residues K337, R366, S367, and K388. Catalysis depends on K337, which acts as the Proton acceptor.

It belongs to the enolase family. Requires Mg(2+) as cofactor.

Its subcellular location is the cytoplasm. The protein localises to the secreted. It is found in the cell surface. It catalyses the reaction (2R)-2-phosphoglycerate = phosphoenolpyruvate + H2O. The protein operates within carbohydrate degradation; glycolysis; pyruvate from D-glyceraldehyde 3-phosphate: step 4/5. Catalyzes the reversible conversion of 2-phosphoglycerate (2-PG) into phosphoenolpyruvate (PEP). It is essential for the degradation of carbohydrates via glycolysis. The polypeptide is Enolase (Ehrlichia canis (strain Jake)).